Here is a 148-residue protein sequence, read N- to C-terminus: uncharacterized protein (148 aa).

CBS domains are found at residues 8 to 68 and 74 to 130; these read MTAD…PNSQ and MTEK…ERAG. The disordered stretch occupies residues 127–148; that stretch reads ERAGSALSDISEGDNREEGFFH. Residues 139–148 are compositionally biased toward basic and acidic residues; the sequence is GDNREEGFFH.

This is an uncharacterized protein from Bacillus subtilis (strain 168).